The primary structure comprises 159 residues: Lipoprotein LpqH (159 aa).

The first 21 residues, 1–21, serve as a signal peptide directing secretion; sequence MKRGLTVAVAGAAILVAGLSG. A lipid anchor (N-palmitoyl cysteine) is attached at cysteine 22. A lipid anchor (S-diacylglycerol cysteine) is attached at cysteine 22. A disordered region spans residues 24–51; sequence SNKSTTGSGETTTAAGTTASPGAASGPK. Positions 27–49 are enriched in low complexity; that stretch reads STTGSGETTTAAGTTASPGAASG.

Belongs to the mycobacterial 19 kDa antigen family. Modified by Lgt on Cys-22 with an S-linked diacylglycerol with a mixture of C16, C18 and C19 fatty acids, signal peptide is removed by LspA, modifed by Lnt with an amide-linked mixture of C16 and C19 fatty acids.

It is found in the cell membrane. Functionally, might be involved in ligand transport. A host TLR2 agonist, modifies host gene expression in response to pathogen. The polypeptide is Lipoprotein LpqH (lpqH) (Mycobacterium tuberculosis (strain CDC 1551 / Oshkosh)).